The sequence spans 131 residues: Small ribosomal subunit protein uS8 (131 aa).

It belongs to the universal ribosomal protein uS8 family. In terms of assembly, part of the 30S ribosomal subunit. Contacts proteins S5 and S12.

Functionally, one of the primary rRNA binding proteins, it binds directly to 16S rRNA central domain where it helps coordinate assembly of the platform of the 30S subunit. The polypeptide is Small ribosomal subunit protein uS8 (Methylococcus capsulatus (strain ATCC 33009 / NCIMB 11132 / Bath)).